Here is an 88-residue protein sequence, read N- to C-terminus: Small ribosomal subunit protein bS20 (88 aa).

Belongs to the bacterial ribosomal protein bS20 family.

In terms of biological role, binds directly to 16S ribosomal RNA. The sequence is that of Small ribosomal subunit protein bS20 from Coprothermobacter proteolyticus (strain ATCC 35245 / DSM 5265 / OCM 4 / BT).